The primary structure comprises 119 residues: Toxin ICK-11 (119 aa).

Residues 1-19 (MMKLYSLVIIATLAAAAFA) form the signal peptide. Intrachain disulfides connect Cys59–Cys74, Cys67–Cys80, Cys71–Cys116, and Cys73–Cys87.

The protein belongs to the neurotoxin 25 family. ICK-8 subfamily. Expressed by the venom gland.

It localises to the secreted. In terms of biological role, ion channel inhibitor. This is Toxin ICK-11 from Trittame loki (Brush-footed trapdoor spider).